The primary structure comprises 248 residues: MSETARTTIDQSEVDRFSAMAAEWWDPTGKFRPLHKFNPVRLAYIRDRVAEHFGRDPKSRQPLEGLRLLDIGCGGGLLCEPMARMGADVLGADASEKNIGIARTHAAGSGVRVDYRAVTAEALAEAGESFDVVLNMEVVEHVADVDFFMTTCAHMVRPGGMMFVATINRTLKAAALAIFAAENVLRWLPRGTHQYEKLVRPEEIENPLVASGLEIADRTGVFFNPLSNQWNLSKDMDVNYMIVAKRPI.

S-adenosyl-L-methionine is bound by residues Arg-41, Gly-72, Asp-93, and Met-136.

This sequence belongs to the methyltransferase superfamily. UbiG/COQ3 family.

The catalysed reaction is a 3-demethylubiquinol + S-adenosyl-L-methionine = a ubiquinol + S-adenosyl-L-homocysteine + H(+). It catalyses the reaction a 3-(all-trans-polyprenyl)benzene-1,2-diol + S-adenosyl-L-methionine = a 2-methoxy-6-(all-trans-polyprenyl)phenol + S-adenosyl-L-homocysteine + H(+). It functions in the pathway cofactor biosynthesis; ubiquinone biosynthesis. O-methyltransferase that catalyzes the 2 O-methylation steps in the ubiquinone biosynthetic pathway. The sequence is that of Ubiquinone biosynthesis O-methyltransferase from Sinorhizobium medicae (strain WSM419) (Ensifer medicae).